A 584-amino-acid polypeptide reads, in one-letter code: Aspartate--tRNA(Asp/Asn) ligase (584 aa).

Residue Glu-177 participates in L-aspartate binding. The aspartate stretch occupies residues 201–204 (QLFK). Arg-223 is a binding site for L-aspartate. ATP-binding positions include 223–225 (RDE) and Gln-232. Residue His-447 participates in L-aspartate binding. Glu-481 contacts ATP. Arg-488 is a binding site for L-aspartate. Position 533–536 (533–536 (GLDR)) interacts with ATP.

The protein belongs to the class-II aminoacyl-tRNA synthetase family. Type 1 subfamily. Homodimer.

Its subcellular location is the cytoplasm. The enzyme catalyses tRNA(Asx) + L-aspartate + ATP = L-aspartyl-tRNA(Asx) + AMP + diphosphate. Aspartyl-tRNA synthetase with relaxed tRNA specificity since it is able to aspartylate not only its cognate tRNA(Asp) but also tRNA(Asn). Reaction proceeds in two steps: L-aspartate is first activated by ATP to form Asp-AMP and then transferred to the acceptor end of tRNA(Asp/Asn). The protein is Aspartate--tRNA(Asp/Asn) ligase of Chlamydia pneumoniae (Chlamydophila pneumoniae).